Consider the following 642-residue polypeptide: MDGKSEFKEELINYILLKKYGKGAQDPPVYSNALKKAPQEMFPPGLVDALDSYSINLSRSEGVEFLVLLNSLVNDIRSEEVKDIIFGMINTNQMLTKLMKDKKEVERFPDTCKMYSEQFKANKPLLKEFNAGSRKEQGNLEIGEPSENVVTRFPPEPNGRLHIGHARAALLNWYFASKGNGRLLVRFDDTNPEKEEERFERGILSDLSLLGINEYTLSHTSDYFDKIIDLGVFLIGEGKAYADNTPQEVMRDERGRGVESRCRSMDVEESKRIFKEMARGNASGYCLRAKIDMSSSNKAMRDPVIFRVNESPHHRTGDKYKVYPTYDFACPIVDSLEGITLSLRANEYRDRNQQYYWFIDNLRLRNRPKIHDFSRLNFENTVLSKRKLKYYVDNGFVSGWDDPRLATIAGIKRLGMNMEALREYILMQGVSQKTCTISWDKVWAINRKKIDPVSARYFCVQQRDAVEVSIDNTSEYTMDVPKHKKNGDLGTKEVFYSSQILLSQEDGRVLQDNEEFTLMNWGNAIVKSKTVENGTVTKMEVSLNPDGDFKLTKNKMSWVSKRGSVTVELAEYGNLMNDEDTEDLALRFNRNSVKKEYWYAESAIINVREGEVIQFERNGFYYCDGFLVFNLLPFTKQKRTGN.

L-glutamate is bound at residue 152 to 154 (RFP). Residues 157–166 (PNGRLHIGHA) carry the 'HIGH' region motif. Residue His162 coordinates ATP. L-glutamate-binding positions include Asp188, 326–330 (YDFAC), and Arg344. ATP-binding positions include Glu347 and 382-386 (VLSKR). Positions 382–386 (VLSKR) match the 'KMSKS' region motif.

Belongs to the class-I aminoacyl-tRNA synthetase family. Glutamate--tRNA ligase type 2 subfamily.

It is found in the cytoplasm. The enzyme catalyses tRNA(Glu) + L-glutamate + ATP = L-glutamyl-tRNA(Glu) + AMP + diphosphate. The polypeptide is Probable glutamate--tRNA ligase, cytoplasmic (Encephalitozoon cuniculi (strain GB-M1) (Microsporidian parasite)).